The sequence spans 63 residues: Large ribosomal subunit protein uL30 (63 aa).

It belongs to the universal ribosomal protein uL30 family. Part of the 50S ribosomal subunit.

The chain is Large ribosomal subunit protein uL30 from Bradyrhizobium sp. (strain ORS 278).